The following is a 220-amino-acid chain: 7-cyano-7-deazaguanine synthase (220 aa).

7–17 (LSGGLDSAVCL) contacts ATP. Residues cysteine 191, cysteine 199, cysteine 202, and cysteine 205 each coordinate Zn(2+).

It belongs to the QueC family. Homodimer. The cofactor is Zn(2+).

It catalyses the reaction 7-carboxy-7-deazaguanine + NH4(+) + ATP = 7-cyano-7-deazaguanine + ADP + phosphate + H2O + H(+). It participates in purine metabolism; 7-cyano-7-deazaguanine biosynthesis. Functionally, catalyzes the ATP-dependent conversion of 7-carboxy-7-deazaguanine (CDG) to 7-cyano-7-deazaguanine (preQ(0)). The chain is 7-cyano-7-deazaguanine synthase from Desulforudis audaxviator (strain MP104C).